A 209-amino-acid polypeptide reads, in one-letter code: Large ribosomal subunit protein uL3 (209 aa).

Gln-150 bears the N5-methylglutamine mark.

Belongs to the universal ribosomal protein uL3 family. In terms of assembly, part of the 50S ribosomal subunit. Forms a cluster with proteins L14 and L19. Post-translationally, methylated by PrmB.

Functionally, one of the primary rRNA binding proteins, it binds directly near the 3'-end of the 23S rRNA, where it nucleates assembly of the 50S subunit. The sequence is that of Large ribosomal subunit protein uL3 from Photobacterium profundum (strain SS9).